Reading from the N-terminus, the 637-residue chain is Phosphomethylpyrimidine synthase (637 aa).

Residues asparagine 242, methionine 271, tyrosine 300, histidine 336, 356-358 (SRG), 397-400 (DGLR), and glutamate 436 contribute to the substrate site. Histidine 440 serves as a coordination point for Zn(2+). Tyrosine 463 serves as a coordination point for substrate. A Zn(2+)-binding site is contributed by histidine 504. Cysteine 584, cysteine 587, and cysteine 592 together coordinate [4Fe-4S] cluster.

It belongs to the ThiC family. Homodimer. [4Fe-4S] cluster is required as a cofactor.

The enzyme catalyses 5-amino-1-(5-phospho-beta-D-ribosyl)imidazole + S-adenosyl-L-methionine = 4-amino-2-methyl-5-(phosphooxymethyl)pyrimidine + CO + 5'-deoxyadenosine + formate + L-methionine + 3 H(+). Its pathway is cofactor biosynthesis; thiamine diphosphate biosynthesis. Its function is as follows. Catalyzes the synthesis of the hydroxymethylpyrimidine phosphate (HMP-P) moiety of thiamine from aminoimidazole ribotide (AIR) in a radical S-adenosyl-L-methionine (SAM)-dependent reaction. The chain is Phosphomethylpyrimidine synthase from Bordetella avium (strain 197N).